The sequence spans 197 residues: Rac-like GTP-binding protein 6 (197 aa).

13-20 (GDGAVGKT) is a binding site for GTP. An Effector region motif is present at residues 35–43 (YVPTVFDNF). Residues 60-64 (DTAGQ) and 118-121 (TKLD) each bind GTP. Cysteine 194 carries the cysteine methyl ester modification. A lipid anchor (S-geranylgeranyl cysteine) is attached at cysteine 194. The propeptide at 195 to 197 (SIL) is removed in mature form.

It belongs to the small GTPase superfamily. Rho family.

It is found in the cytoplasm. It localises to the membrane. Inactive GDP-bound Rho GTPases reside in the cytosol, are found in a complex with Rho GDP-dissociation inhibitors (Rho GDIs), and are released from the GDI protein in order to translocate to membranes upon activation. In Oryza sativa subsp. japonica (Rice), this protein is Rac-like GTP-binding protein 6 (RAC6).